Consider the following 346-residue polypeptide: Tubulin-specific chaperone C (346 aa).

Methionine 1 bears the N-acetylmethionine mark. The tract at residues 1–26 is disordered; sequence MESVSCSAAAVRTGDMESQRDLSLVP. Serine 80 and serine 168 each carry phosphoserine. The segment at 140–171 is disordered; it reads KTRGKDAASSTKVDAAPGIPPAVESIQDSPLP. One can recognise a C-CAP/cofactor C-like domain in the interval 171-323; sequence PKKAEGDLGP…NWNDVDDFNW (153 aa).

The protein belongs to the TBCC family. As to quaternary structure, supercomplex made of cofactors A to E. Cofactors A and D function by capturing and stabilizing tubulin in a quasi-native conformation. Cofactor E binds to the cofactor D-tubulin complex; interaction with cofactor C then causes the release of tubulin polypeptides that are committed to the native state. Expressed in the retina. Expressed in the rod and cone photoreceptors, extending from the inner segments (IS), through the outer nuclear layer (ONL) and into the synapses in the outer plexiform layer (OPL). Strongly expressed to the photoreceptor connecting cilium at the tips of the IS (at protein level).

The protein localises to the cytoplasm. Functionally, tubulin-folding protein; involved in the final step of the tubulin folding pathway. The protein is Tubulin-specific chaperone C (TBCC) of Homo sapiens (Human).